Here is a 175-residue protein sequence, read N- to C-terminus: Transcription factor E (175 aa).

The HTH TFE/IIEalpha-type domain maps to 3–88 (DNPLIQQVLF…TWKPSLEKLP (86 aa)).

This sequence belongs to the TFE family. As to quaternary structure, monomer. Interaction with RNA polymerase subunits RpoF and RpoE is necessary for Tfe stimulatory transcription activity. Able to interact with Tbp and RNA polymerase in the absence of DNA promoter. Interacts both with the preinitiation and elongation complexes.

In terms of biological role, transcription factor that plays a role in the activation of archaeal genes transcribed by RNA polymerase. Facilitates transcription initiation by enhancing TATA-box recognition by TATA-box-binding protein (Tbp), and transcription factor B (Tfb) and RNA polymerase recruitment. Not absolutely required for transcription in vitro, but particularly important in cases where Tbp or Tfb function is not optimal. It dynamically alters the nucleic acid-binding properties of RNA polymerases by stabilizing the initiation complex and destabilizing elongation complexes. Seems to translocate with the RNA polymerase following initiation and acts by binding to the non template strand of the transcription bubble in elongation complexes. This chain is Transcription factor E, found in Methanococcus vannielii (strain ATCC 35089 / DSM 1224 / JCM 13029 / OCM 148 / SB).